The following is a 280-amino-acid chain: Shikimate dehydrogenase (NADP(+)) (280 aa).

Shikimate-binding positions include 20–22 (TLS) and Thr67. The active-site Proton acceptor is Lys71. Positions 92 and 107 each coordinate shikimate. Residues 131-135 (GAGGA), 154-159 (NRTIDK), and Leu224 contribute to the NADP(+) site. Tyr226 contacts shikimate. Residue Gly247 coordinates NADP(+).

The protein belongs to the shikimate dehydrogenase family. As to quaternary structure, homodimer.

It carries out the reaction shikimate + NADP(+) = 3-dehydroshikimate + NADPH + H(+). It participates in metabolic intermediate biosynthesis; chorismate biosynthesis; chorismate from D-erythrose 4-phosphate and phosphoenolpyruvate: step 4/7. Involved in the biosynthesis of the chorismate, which leads to the biosynthesis of aromatic amino acids. Catalyzes the reversible NADPH linked reduction of 3-dehydroshikimate (DHSA) to yield shikimate (SA). The chain is Shikimate dehydrogenase (NADP(+)) from Carboxydothermus hydrogenoformans (strain ATCC BAA-161 / DSM 6008 / Z-2901).